The sequence spans 117 residues: Large ribosomal subunit protein bL19 (117 aa).

This sequence belongs to the bacterial ribosomal protein bL19 family.

This protein is located at the 30S-50S ribosomal subunit interface and may play a role in the structure and function of the aminoacyl-tRNA binding site. This Shewanella baltica (strain OS155 / ATCC BAA-1091) protein is Large ribosomal subunit protein bL19.